Here is a 368-residue protein sequence, read N- to C-terminus: tRNA-specific 2-thiouridylase MnmA (368 aa).

ATP contacts are provided by residues 11-18 (GMSGGVDS) and methionine 37. Positions 97 to 99 (NPD) are interaction with target base in tRNA. Cysteine 102 (nucleophile) is an active-site residue. Residues cysteine 102 and cysteine 199 are joined by a disulfide bond. Glycine 127 serves as a coordination point for ATP. Residues 149-151 (KDQ) form an interaction with tRNA region. Cysteine 199 (cysteine persulfide intermediate) is an active-site residue. Residues 311–312 (RY) are interaction with tRNA.

It belongs to the MnmA/TRMU family. In terms of assembly, interacts with TusE.

It is found in the cytoplasm. The enzyme catalyses S-sulfanyl-L-cysteinyl-[protein] + uridine(34) in tRNA + AH2 + ATP = 2-thiouridine(34) in tRNA + L-cysteinyl-[protein] + A + AMP + diphosphate + H(+). Catalyzes the 2-thiolation of uridine at the wobble position (U34) of tRNA(Lys), tRNA(Glu) and tRNA(Gln), leading to the formation of s(2)U34, the first step of tRNA-mnm(5)s(2)U34 synthesis. Sulfur is provided by IscS, via a sulfur-relay system. Binds ATP and its substrate tRNAs. In Shigella boydii serotype 4 (strain Sb227), this protein is tRNA-specific 2-thiouridylase MnmA.